Consider the following 151-residue polypeptide: Ribosome maturation factor RimP (151 aa).

Belongs to the RimP family.

It is found in the cytoplasm. Functionally, required for maturation of 30S ribosomal subunits. The polypeptide is Ribosome maturation factor RimP (Haemophilus influenzae (strain PittEE)).